Reading from the N-terminus, the 457-residue chain is Flavin-containing monooxygenase FMO GS-OX2 (457 aa).

17–22 lines the FAD pocket; the sequence is GAGAAG. 211–216 contacts NADP(+); that stretch reads GNFASG.

This sequence belongs to the FMO family.

It catalyses the reaction a (Z)-omega-(methylsulfanyl)-N-sulfo-alkylhydroximate S-glucoside + NADPH + O2 + H(+) = a (Z)-omega-(methylsulfinyl)-alkyl-glucosinolate + NADP(+) + H2O. In terms of biological role, catalyzes the conversion of methylthioalkyl glucosinolates of any chain length into methylsulfinylalkyl glucosinolates. This is Flavin-containing monooxygenase FMO GS-OX2 (FMOGS-OX2) from Arabidopsis thaliana (Mouse-ear cress).